A 631-amino-acid chain; its full sequence is Phosphomethylpyrimidine synthase (631 aa).

Substrate is bound by residues asparagine 239, methionine 268, tyrosine 297, histidine 333, 353-355 (SRG), 394-397 (DGLR), and glutamate 433. Histidine 437 is a binding site for Zn(2+). A substrate-binding site is contributed by tyrosine 460. Residue histidine 501 coordinates Zn(2+). Residues cysteine 581, cysteine 584, and cysteine 589 each contribute to the [4Fe-4S] cluster site.

This sequence belongs to the ThiC family. In terms of assembly, homodimer. The cofactor is [4Fe-4S] cluster.

It carries out the reaction 5-amino-1-(5-phospho-beta-D-ribosyl)imidazole + S-adenosyl-L-methionine = 4-amino-2-methyl-5-(phosphooxymethyl)pyrimidine + CO + 5'-deoxyadenosine + formate + L-methionine + 3 H(+). Its pathway is cofactor biosynthesis; thiamine diphosphate biosynthesis. Catalyzes the synthesis of the hydroxymethylpyrimidine phosphate (HMP-P) moiety of thiamine from aminoimidazole ribotide (AIR) in a radical S-adenosyl-L-methionine (SAM)-dependent reaction. The chain is Phosphomethylpyrimidine synthase from Escherichia coli O139:H28 (strain E24377A / ETEC).